The sequence spans 140 residues: Endoribonuclease YbeY (140 aa).

Residues H105, H109, and D115 each coordinate Zn(2+).

This sequence belongs to the endoribonuclease YbeY family. The cofactor is Zn(2+).

The protein localises to the cytoplasm. Its function is as follows. Single strand-specific metallo-endoribonuclease involved in late-stage 70S ribosome quality control and in maturation of the 3' terminus of the 16S rRNA. This chain is Endoribonuclease YbeY, found in Flavobacterium psychrophilum (strain ATCC 49511 / DSM 21280 / CIP 103535 / JIP02/86).